The primary structure comprises 172 residues: Large ribosomal subunit protein uL10 (172 aa).

This sequence belongs to the universal ribosomal protein uL10 family. As to quaternary structure, part of the ribosomal stalk of the 50S ribosomal subunit. The N-terminus interacts with L11 and the large rRNA to form the base of the stalk. The C-terminus forms an elongated spine to which L12 dimers bind in a sequential fashion forming a multimeric L10(L12)X complex.

Its function is as follows. Forms part of the ribosomal stalk, playing a central role in the interaction of the ribosome with GTP-bound translation factors. The sequence is that of Large ribosomal subunit protein uL10 from Rhizobium etli (strain CIAT 652).